A 179-amino-acid polypeptide reads, in one-letter code: MQTLKAKYNEQVRPALMQQFGYSSIMAVPRIEKIVINEGLGSSKDDSKAIDKAAKELALITLQKPVITKAKKSISNFKLRQGMPVGVKVTLRGERMYVFLEKLINIGLPRIRDFRGINPNSFDGRGNYNLGIKEQLIFPEITYDMVDKVRGMDITIVTTAKTDEEARALLQAMGLPFRK.

This sequence belongs to the universal ribosomal protein uL5 family. As to quaternary structure, part of the 50S ribosomal subunit; part of the 5S rRNA/L5/L18/L25 subcomplex. Contacts the 5S rRNA and the P site tRNA. Forms a bridge to the 30S subunit in the 70S ribosome.

Functionally, this is one of the proteins that bind and probably mediate the attachment of the 5S RNA into the large ribosomal subunit, where it forms part of the central protuberance. In the 70S ribosome it contacts protein S13 of the 30S subunit (bridge B1b), connecting the 2 subunits; this bridge is implicated in subunit movement. Contacts the P site tRNA; the 5S rRNA and some of its associated proteins might help stabilize positioning of ribosome-bound tRNAs. This chain is Large ribosomal subunit protein uL5, found in Deinococcus geothermalis (strain DSM 11300 / CIP 105573 / AG-3a).